We begin with the raw amino-acid sequence, 923 residues long: Calmodulin-binding transcription activator 5 (923 aa).

Positions 25 to 151 form a DNA-binding region, CG-1; sequence IQTMLDEAYS…YRETHEVHAA (127 aa). Residues 272–372 are transcription activation; that stretch reads VYQNNNSCGA…HSHSDIPEQV (101 aa). The stretch at 611-640 is one ANK repeat; that stretch reads QGWTALHWAAYYGREKMVAALLSAGARPNL. IQ domains follow at residues 757-786, 799-828, and 875-904; these read NIIA…IQYR, MRKK…SVGV, and LERS…AHEE. Positions 824 to 846 are calmodulin-binding; it reads WSVGVLEKAILRWRLKRKGFRGL. Residues 887 to 914 are a coiled coil; sequence RSKKAQQDYRRMKLAHEEAQLEYDGMQE.

This sequence belongs to the CAMTA family. As to expression, expressed in roots, stems, leaves, pollen, top of sepals and siliques.

The protein resides in the nucleus. In terms of biological role, transcription activator. Binds to the DNA consensus sequence 5'-[ACG]CGCG[GTC]-3'. Regulates transcriptional activity in response to calcium signals. Binds calmodulin in a calcium-dependent manner. Involved in response to cold. Contributes together with CAMTA3 to the positive regulation of the cold-induced expression of DREB1A/CBF3, DREB1B/CBF1 and DREB1C/CBF2. The sequence is that of Calmodulin-binding transcription activator 5 from Arabidopsis thaliana (Mouse-ear cress).